The sequence spans 622 residues: MQTSKSSLAALTLGAIGVVYGDIGTSVLYAVKEVFGSGHVPFTHANVYGVLSVLFWTLTVIVSLKYVVLVLRADNHGEGGLIAMLALASQAVKDRPRLRGWLLGLGIFGTSLFYGDGVITPAISVLSAIEGLEVVSPHFGKAVIPLTLVVLFGLFAVQKRGTAGVGRYFGPVTLVWFFTIAALGVPHIVGHPEILGALSPHHALGFILGNPGISFIILGAVVLCVTGAEALYADLGHFGKRPIRLAWFSVAMPALTINYFGQGALLLAEPSAVKNPFYMMAPDWALVPLVVLATMATVIASQALITGAFSVTKQVIQLGYLPRLNIQHTSVRETGQIYLPFVNWSLFVAIVLAVVMFRNSSNLAAAYGIAVTLDMLITTVLTFFVIRYGWGYPLALCVATTGFFFVVDLAFFSSNLLKLLQGGWFPLMIGGLVFTLMMTWKRGRELLNDKLREDSIGLQDFLASVQANPPMRVDGTAVFLSAEAGVVPNALLHNLKHNKVLHRQNLFVTVRYHETPWIGLDQRLQVAPLGGDCWQVTVNYGFKNELDLPSALRLMHGRGCELETMSTSYFLSRDVVVPTIGSGMAPWREKLFAQMHHNASGVAAFLHLPSNAVVELGSKVEI.

12 helical membrane-spanning segments follow: residues 8-28 (LAAL…TSVL), 50-70 (VLSV…VVLV), 100-120 (GWLL…GVIT), 137-157 (PHFG…LFAV), 169-189 (FGPV…PHIV), 203-223 (ALGF…AVVL), 247-267 (WFSV…ALLL), 285-305 (ALVP…QALI), 337-357 (IYLP…VVMF), 366-386 (AYGI…FFVI), 392-412 (YPLA…LAFF), and 419-439 (LLQG…LMMT).

It belongs to the HAK/KUP transporter (TC 2.A.72) family.

The protein resides in the cell inner membrane. It catalyses the reaction K(+)(in) + H(+)(in) = K(+)(out) + H(+)(out). Transport of potassium into the cell. Likely operates as a K(+):H(+) symporter. This Acidovorax ebreus (strain TPSY) (Diaphorobacter sp. (strain TPSY)) protein is Probable potassium transport system protein Kup.